A 264-amino-acid polypeptide reads, in one-letter code: uncharacterized protein (264 aa).

Positions 57 to 264 (RPPASPCPPR…VYPHPHLTAT (208 aa)) are disordered. Positions 140-153 (GKARRSPGRRRHPH) are enriched in basic residues. Positions 154 to 165 (SSFPQASSPSSP) are enriched in low complexity.

This is an uncharacterized protein from Homo sapiens (Human).